Reading from the N-terminus, the 367-residue chain is Methylthioribose-1-phosphate isomerase (367 aa).

Substrate is bound by residues 54-56, arginine 91, and glutamine 201; that span reads RGA. Catalysis depends on aspartate 242, which acts as the Proton donor. 252–253 lines the substrate pocket; the sequence is NK.

The protein belongs to the eIF-2B alpha/beta/delta subunits family. MtnA subfamily.

The catalysed reaction is 5-(methylsulfanyl)-alpha-D-ribose 1-phosphate = 5-(methylsulfanyl)-D-ribulose 1-phosphate. It functions in the pathway amino-acid biosynthesis; L-methionine biosynthesis via salvage pathway; L-methionine from S-methyl-5-thio-alpha-D-ribose 1-phosphate: step 1/6. In terms of biological role, catalyzes the interconversion of methylthioribose-1-phosphate (MTR-1-P) into methylthioribulose-1-phosphate (MTRu-1-P). The sequence is that of Methylthioribose-1-phosphate isomerase from Acidiphilium cryptum (strain JF-5).